The sequence spans 38 residues: Large ribosomal subunit protein bL36A (38 aa).

Belongs to the bacterial ribosomal protein bL36 family.

This Enterobacter sp. (strain 638) protein is Large ribosomal subunit protein bL36A.